Consider the following 843-residue polypeptide: Probable inorganic carbon transporter subunit DabA 2 (843 aa).

Positions 352, 354, 536, and 551 each coordinate Zn(2+).

This sequence belongs to the inorganic carbon transporter (TC 9.A.2) DabA family. As to quaternary structure, forms a complex with DabB. Requires Zn(2+) as cofactor.

The protein resides in the cell inner membrane. Its function is as follows. Part of an energy-coupled inorganic carbon pump. This chain is Probable inorganic carbon transporter subunit DabA 2, found in Bradyrhizobium sp. (strain BTAi1 / ATCC BAA-1182).